The primary structure comprises 599 residues: Flap endonuclease GEN-like 1 (599 aa).

An N-domain region spans residues M1–I96. Residues G2 to G95 form an XPG-N domain region. D31, D75, E140, E142, D161, D163, and D213 together coordinate Mg(2+). The XPG-I domain stretch occupies residues E128–D213. The segment at E128–G217 is I-domain. The segment at D213–L407 is 5'-3' exonuclease domain. Disordered regions lie at residues R522–Q545 and A559–G599. 2 stretches are compositionally biased toward polar residues: residues S563–A572 and A580–K590.

The protein belongs to the XPG/RAD2 endonuclease family. GEN subfamily. It depends on Mg(2+) as a cofactor.

It localises to the nucleus. Functionally, endonuclease which cleaves flap structures at the junction between single-stranded DNA and double-stranded DNA with a specific cleavage site in the 5' overhang strand exactly one nucleotide 3' of the branch point. Structure- and sequence-specific nuclease that resolves holliday junctions (HJs) by symmetrically oriented incisions in two opposing strands near the junction point, thus leading to ligatable products; HJs are physical links between homologous DNA molecules that arise as central intermediary structures during homologous recombination and repair in meiotic and somatic cells. Structure-specific nuclease with 5'-flap endonuclease activity, preferentially cleaving static flaps 5' overhang strand exactly one nucleotide in the 3' direction of the branch point. Also able to cleave double-stranded flap strand 1 exactly at the branch point. The polypeptide is Flap endonuclease GEN-like 1 (Arabidopsis thaliana (Mouse-ear cress)).